Reading from the N-terminus, the 740-residue chain is E3 ubiquitin-protein ligase WAV3 (740 aa).

The disordered stretch occupies residues 14-105 (PRNSDAAAPD…AISNPSSPRS (92 aa)). Over residues 49–67 (SGGSNPSTPRSTSSPSLRC) the composition is skewed to low complexity. The segment covering 71–90 (DAQTPTAEQTSTPRSATKSP) has biased composition (polar residues). The RING-type; atypical zinc-finger motif lies at 122 to 167 (CGICLNSVKTGQGTAKYTAECSHAFHFPCIADYVRKQGKLVCPVCN). One can recognise a VWFA domain in the interval 332 to 476 (DLVVVVDVGG…IPVTEHGFGE (145 aa)). A disordered region spans residues 677–709 (QSQHQQQHNQRRRGSERETTTTMTLMDENGEPL).

In terms of assembly, interacts with SINAT1, SINAT2, SINAT3, SINAT4, SINAT5, TOR1/SPR2 and FIP2. Expressed in root tips and leaf primordia.

It catalyses the reaction S-ubiquitinyl-[E2 ubiquitin-conjugating enzyme]-L-cysteine + [acceptor protein]-L-lysine = [E2 ubiquitin-conjugating enzyme]-L-cysteine + N(6)-ubiquitinyl-[acceptor protein]-L-lysine.. Its function is as follows. E3 ubiquitin-protein ligase involved in the regulation of root growth. Acts as a positive regulator of root gravitropism. Possesses E3 protein ligase activity in vitro. This Arabidopsis thaliana (Mouse-ear cress) protein is E3 ubiquitin-protein ligase WAV3.